The following is a 247-amino-acid chain: Pleckstrin homology domain-containing family F member 2 (247 aa).

A PH domain is found at 35–131; it reads VLIGEGVLTK…WMSHINKCVS (97 aa). An FYVE-type zinc finger spans residues 152–212; the sequence is DSEATVCMRC…VCEFCYKQLS (61 aa). C158, C161, C175, C178, C183, C186, C204, and C207 together coordinate Zn(2+). A disordered region spans residues 213-247; sequence TGATLPPRSDSYSRQGSDFGSNNISDDDDDDDSSD. Over residues 222 to 236 the composition is skewed to polar residues; sequence DSYSRQGSDFGSNNI. The span at 237 to 247 shows a compositional bias: acidic residues; the sequence is SDDDDDDDSSD.

The protein resides in the early endosome membrane. It is found in the endoplasmic reticulum. Functionally, may play a role in early endosome fusion upstream of RAB5, hence regulating receptor trafficking and fluid-phase transport. Enhances cellular sensitivity to TNF-induced apoptosis. The chain is Pleckstrin homology domain-containing family F member 2 (plekhf2) from Danio rerio (Zebrafish).